Reading from the N-terminus, the 157-residue chain is Lipoprotein signal peptidase (157 aa).

3 consecutive transmembrane segments (helical) span residues 10–30 (LVFMGVFFLIFGVDQAIKYAI), 58–78 (FLEGGLKYLQILLILGLFIFL), and 84–104 (LFKNHAIEFGMVFGAGVSNVL). Catalysis depends on residues Asp-114 and Asp-131. A helical membrane pass occupies residues 122 to 142 (FDFAIFNFADVMIDVGVGVLL).

This sequence belongs to the peptidase A8 family.

Its subcellular location is the cell inner membrane. It catalyses the reaction Release of signal peptides from bacterial membrane prolipoproteins. Hydrolyzes -Xaa-Yaa-Zaa-|-(S,diacylglyceryl)Cys-, in which Xaa is hydrophobic (preferably Leu), and Yaa (Ala or Ser) and Zaa (Gly or Ala) have small, neutral side chains.. Its pathway is protein modification; lipoprotein biosynthesis (signal peptide cleavage). Its function is as follows. This protein specifically catalyzes the removal of signal peptides from prolipoproteins. In Helicobacter pylori (strain ATCC 700392 / 26695) (Campylobacter pylori), this protein is Lipoprotein signal peptidase.